Here is a 157-residue protein sequence, read N- to C-terminus: 6,7-dimethyl-8-ribityllumazine synthase (157 aa).

5-amino-6-(D-ribitylamino)uracil is bound by residues tryptophan 27, alanine 59 to glutamate 61, and valine 81 to isoleucine 83. Glutamate 86 to threonine 87 serves as a coordination point for (2S)-2-hydroxy-3-oxobutyl phosphate. The active-site Proton donor is histidine 89. 5-amino-6-(D-ribitylamino)uracil is bound at residue asparagine 114. A (2S)-2-hydroxy-3-oxobutyl phosphate-binding site is contributed by arginine 128.

This sequence belongs to the DMRL synthase family. As to quaternary structure, homopentamer.

It catalyses the reaction (2S)-2-hydroxy-3-oxobutyl phosphate + 5-amino-6-(D-ribitylamino)uracil = 6,7-dimethyl-8-(1-D-ribityl)lumazine + phosphate + 2 H2O + H(+). The protein operates within cofactor biosynthesis; riboflavin biosynthesis; riboflavin from 2-hydroxy-3-oxobutyl phosphate and 5-amino-6-(D-ribitylamino)uracil: step 1/2. Functionally, catalyzes the formation of 6,7-dimethyl-8-ribityllumazine by condensation of 5-amino-6-(D-ribitylamino)uracil with 3,4-dihydroxy-2-butanone 4-phosphate. This is the penultimate step in the biosynthesis of riboflavin. The protein is 6,7-dimethyl-8-ribityllumazine synthase of Mycolicibacterium vanbaalenii (strain DSM 7251 / JCM 13017 / BCRC 16820 / KCTC 9966 / NRRL B-24157 / PYR-1) (Mycobacterium vanbaalenii).